An 82-amino-acid chain; its full sequence is Small ribosomal subunit protein bS16 (82 aa).

It belongs to the bacterial ribosomal protein bS16 family.

The chain is Small ribosomal subunit protein bS16 from Yersinia pseudotuberculosis serotype O:1b (strain IP 31758).